A 769-amino-acid polypeptide reads, in one-letter code: 5-methyltetrahydropteroyltriglutamate--homocysteine methyltransferase (769 aa).

5-methyltetrahydropteroyltri-L-glutamate-binding positions include 18–21 (RELK) and Lys127. L-homocysteine contacts are provided by residues 447 to 449 (IGS) and Glu500. L-methionine is bound by residues 447–449 (IGS) and Glu500. Residues 531–532 (RC) and Trp577 each bind 5-methyltetrahydropteroyltri-L-glutamate. Position 615 (Asp615) interacts with L-homocysteine. Residue Asp615 coordinates L-methionine. Glu621 provides a ligand contact to 5-methyltetrahydropteroyltri-L-glutamate. His657, Cys659, and Glu681 together coordinate Zn(2+). Residue His710 is the Proton donor of the active site. Residue Cys742 coordinates Zn(2+).

Belongs to the vitamin-B12 independent methionine synthase family. Requires Zn(2+) as cofactor.

The catalysed reaction is 5-methyltetrahydropteroyltri-L-glutamate + L-homocysteine = tetrahydropteroyltri-L-glutamate + L-methionine. The protein operates within amino-acid biosynthesis; L-methionine biosynthesis via de novo pathway; L-methionine from L-homocysteine (MetE route): step 1/1. Catalyzes the transfer of a methyl group from 5-methyltetrahydrofolate to homocysteine resulting in methionine formation. This is 5-methyltetrahydropteroyltriglutamate--homocysteine methyltransferase from Chelativorans sp. (strain BNC1).